We begin with the raw amino-acid sequence, 454 residues long: Pup--protein ligase (454 aa).

A Mg(2+)-binding site is contributed by E9. R53 serves as a coordination point for ATP. Y55 lines the Mg(2+) pocket. D57 serves as the catalytic Proton acceptor. E63 contributes to the Mg(2+) binding site. Positions 66 and 420 each coordinate ATP.

The protein belongs to the Pup ligase/Pup deamidase family. Pup-conjugating enzyme subfamily.

It carries out the reaction ATP + [prokaryotic ubiquitin-like protein]-L-glutamate + [protein]-L-lysine = ADP + phosphate + N(6)-([prokaryotic ubiquitin-like protein]-gamma-L-glutamyl)-[protein]-L-lysine.. It functions in the pathway protein degradation; proteasomal Pup-dependent pathway. It participates in protein modification; protein pupylation. Its function is as follows. Catalyzes the covalent attachment of the prokaryotic ubiquitin-like protein modifier Pup to the proteasomal substrate proteins, thereby targeting them for proteasomal degradation. This tagging system is termed pupylation. The ligation reaction involves the side-chain carboxylate of the C-terminal glutamate of Pup and the side-chain amino group of a substrate lysine. In Pseudarthrobacter chlorophenolicus (strain ATCC 700700 / DSM 12829 / CIP 107037 / JCM 12360 / KCTC 9906 / NCIMB 13794 / A6) (Arthrobacter chlorophenolicus), this protein is Pup--protein ligase.